The following is a 221-amino-acid chain: Octanoyltransferase (221 aa).

Residues 35–221 (ESYENRIIFC…RELLAALLSK (187 aa)) enclose the BPL/LPL catalytic domain. Substrate-binding positions include 80–87 (RGGDITYH), 152–154 (AIG), and 165–167 (GLA). The active-site Acyl-thioester intermediate is cysteine 183.

This sequence belongs to the LipB family.

It is found in the cytoplasm. The catalysed reaction is octanoyl-[ACP] + L-lysyl-[protein] = N(6)-octanoyl-L-lysyl-[protein] + holo-[ACP] + H(+). It participates in protein modification; protein lipoylation via endogenous pathway; protein N(6)-(lipoyl)lysine from octanoyl-[acyl-carrier-protein]: step 1/2. Functionally, catalyzes the transfer of endogenously produced octanoic acid from octanoyl-acyl-carrier-protein onto the lipoyl domains of lipoate-dependent enzymes. Lipoyl-ACP can also act as a substrate although octanoyl-ACP is likely to be the physiological substrate. The protein is Octanoyltransferase of Bacteroides fragilis (strain ATCC 25285 / DSM 2151 / CCUG 4856 / JCM 11019 / LMG 10263 / NCTC 9343 / Onslow / VPI 2553 / EN-2).